We begin with the raw amino-acid sequence, 270 residues long: Interleukin-1 beta (270 aa).

Residues 1-118 (MATVPEPTSE…VYDDDAFVCD (118 aa)) constitute a propeptide that is removed on maturation.

It belongs to the IL-1 family. In terms of assembly, monomer. In its precursor form, weakly interacts with full-length MEFV; the mature cytokine does not interact at all. Interacts with integrins ITGAV:ITGBV and ITGA5:ITGB1; integrin-binding is required for IL1B signaling. Interacts with cargo receptor TMED10; the interaction is direct and is required for the secretion of IL1B mature form. Interacts with HSP90AB1; the interaction facilitates cargo translocation into the ERGIC. Interacts with HSP90B1; the interaction facilitates cargo translocation into the ERGIC.

It localises to the cytoplasm. The protein resides in the cytosol. The protein localises to the secreted. It is found in the lysosome. Its subcellular location is the extracellular exosome. Its function is as follows. Potent pro-inflammatory cytokine. Initially discovered as the major endogenous pyrogen, induces prostaglandin synthesis, neutrophil influx and activation, T-cell activation and cytokine production, B-cell activation and antibody production, and fibroblast proliferation and collagen production. Promotes Th17 differentiation of T-cells. Synergizes with IL12/interleukin-12 to induce IFNG synthesis from T-helper 1 (Th1) cells. Plays a role in angiogenesis by inducing VEGF production synergistically with TNF and IL6. Involved in transduction of inflammation downstream of pyroptosis: its mature form is specifically released in the extracellular milieu by passing through the gasdermin-D (GSDMD) pore. The protein is Interleukin-1 beta (IL1B) of Eumetopias jubatus (Steller sea lion).